Consider the following 458-residue polypeptide: Exodeoxyribonuclease 7 large subunit (458 aa).

It belongs to the XseA family. Heterooligomer composed of large and small subunits.

The protein resides in the cytoplasm. It carries out the reaction Exonucleolytic cleavage in either 5'- to 3'- or 3'- to 5'-direction to yield nucleoside 5'-phosphates.. Functionally, bidirectionally degrades single-stranded DNA into large acid-insoluble oligonucleotides, which are then degraded further into small acid-soluble oligonucleotides. The chain is Exodeoxyribonuclease 7 large subunit from Geobacter sp. (strain M21).